The following is a 181-amino-acid chain: Probable pyruvoyl-dependent arginine decarboxylase (181 aa).

Ser-43 carries the pyruvic acid (Ser) modification.

The protein belongs to the PdaD family. Pyruvate is required as a cofactor.

It catalyses the reaction L-arginine + H(+) = agmatine + CO2. The polypeptide is Probable pyruvoyl-dependent arginine decarboxylase (Chlorobaculum tepidum (strain ATCC 49652 / DSM 12025 / NBRC 103806 / TLS) (Chlorobium tepidum)).